Reading from the N-terminus, the 152-residue chain is Small ribosomal subunit protein uS11 (152 aa).

Belongs to the universal ribosomal protein uS11 family. In terms of assembly, component of the small ribosomal subunit. Part of the small subunit (SSU) processome, composed of more than 70 proteins and the RNA chaperone small nucleolar RNA (snoRNA) U3.

The protein localises to the cytoplasm. Its subcellular location is the nucleus. It is found in the nucleolus. Functionally, component of the small ribosomal subunit. The ribosome is a large ribonucleoprotein complex responsible for the synthesis of proteins in the cell. Part of the small subunit (SSU) processome, first precursor of the small eukaryotic ribosomal subunit. During the assembly of the SSU processome in the nucleolus, many ribosome biogenesis factors, an RNA chaperone and ribosomal proteins associate with the nascent pre-rRNA and work in concert to generate RNA folding, modifications, rearrangements and cleavage as well as targeted degradation of pre-ribosomal RNA by the RNA exosome. This is Small ribosomal subunit protein uS11 (rps-14) from Caenorhabditis elegans.